The chain runs to 67 residues: Peptide Hp1239 (67 aa).

The first 23 residues, 1–23, serve as a signal peptide directing secretion; sequence MKTQFTVLLITLVLFQMLSQSEA. Phenylalanine 36 bears the Phenylalanine amide mark. A propeptide spanning residues 40–67 is cleaved from the precursor; the sequence is GLSDLSDLDELFDGEITKADLDLLREIM.

This sequence belongs to the non-disulfide-bridged peptide (NDBP) superfamily. Short antimicrobial peptide (group 4) family. Expressed by the venom gland.

Its subcellular location is the secreted. The protein localises to the target cell membrane. In terms of biological role, amphipathic peptide with antibacterial activities. Shows antiviral activities against the herpes simplex virus type-1. It potently inhibits the initial infection by provoking the rupture of viral envelop and the dissociation of proteins from the virions (EC(50) is 0.41 uM). It also effectively inhibits viral attachment (EC(50) is 5.73 uM), viral entry (EC(50) is 4.32 uM) and viral proliferation after infection (EC(50) is 8.41 uM). Morever, it enters mammalian tested cells (Vero) and reduces the intracellular infectivity. The chain is Peptide Hp1239 from Heterometrus petersii (Asian forest scorpion).